The chain runs to 368 residues: UDP-N-acetylglucosamine--N-acetylmuramyl-(pentapeptide) pyrophosphoryl-undecaprenol N-acetylglucosamine transferase (368 aa).

UDP-N-acetyl-alpha-D-glucosamine-binding positions include 14–16, asparagine 125, arginine 168, serine 196, and glutamine 297; that span reads TGG.

It belongs to the glycosyltransferase 28 family. MurG subfamily.

Its subcellular location is the cell inner membrane. It carries out the reaction di-trans,octa-cis-undecaprenyl diphospho-N-acetyl-alpha-D-muramoyl-L-alanyl-D-glutamyl-meso-2,6-diaminopimeloyl-D-alanyl-D-alanine + UDP-N-acetyl-alpha-D-glucosamine = di-trans,octa-cis-undecaprenyl diphospho-[N-acetyl-alpha-D-glucosaminyl-(1-&gt;4)]-N-acetyl-alpha-D-muramoyl-L-alanyl-D-glutamyl-meso-2,6-diaminopimeloyl-D-alanyl-D-alanine + UDP + H(+). The protein operates within cell wall biogenesis; peptidoglycan biosynthesis. Its function is as follows. Cell wall formation. Catalyzes the transfer of a GlcNAc subunit on undecaprenyl-pyrophosphoryl-MurNAc-pentapeptide (lipid intermediate I) to form undecaprenyl-pyrophosphoryl-MurNAc-(pentapeptide)GlcNAc (lipid intermediate II). This is UDP-N-acetylglucosamine--N-acetylmuramyl-(pentapeptide) pyrophosphoryl-undecaprenol N-acetylglucosamine transferase from Nitrobacter winogradskyi (strain ATCC 25391 / DSM 10237 / CIP 104748 / NCIMB 11846 / Nb-255).